Reading from the N-terminus, the 380-residue chain is Ceramide synthase 2 (380 aa).

The Lumenal segment spans residues 1–40 (MLQTLYDYFWWERLWLPVNLTWADLEDKDGRVYAKASDLY). N-linked (GlcNAc...) asparagine glycosylation occurs at Asn19. Residues 41–61 (ITLPLALLFLVIRYFFELYVA) form a helical membrane-spanning segment. The tract at residues 67–128 (LLNVKEKTRL…RRRRNQDRPS (62 aa)) is homeobox-like. Positions 131-332 (KKFREASWRF…ILRMAHKFIT (202 aa)) constitute a TLC domain. A run of 4 helical transmembrane segments spans residues 140-160 (FTYYLIAFVAGMAVTVDKPWF), 175-195 (IIPSQYWYYMIELSFYWSLLF), 209-229 (QIIHHVATIILLCFSWFANYV), and 264-284 (LFIVFAIVFIITRLVIMPFWI). The Last loop motif signature appears at 291 to 300 (YPLELYPAFF). The chain crosses the membrane as a helical span at residues 304 to 324 (FFNFMMAVLQMLHIFWAYFIL). Over 325–380 (RMAHKFITGKLIEDERSDREETESSEGEETAAGAGAKSRLLANGHPILNNNHPKND) the chain is Cytoplasmic. Residues 340-380 (RSDREETESSEGEETAAGAGAKSRLLANGHPILNNNHPKND) form a disordered region. Ser341 carries the post-translational modification Phosphoserine. Acidic residues predominate over residues 344 to 353 (EETESSEGEE). Thr346 carries the post-translational modification Phosphothreonine. Residues Ser348 and Ser349 each carry the phosphoserine modification.

Interacts with ATP6V0C, ASGR1, ASGR2 and SLC22A1/OCT1. Interacts with ELOV1, HSD17B12 and TECR. Interacts with NDUFS2. Interacts with PAQR4; the interaction regulates the stability and activity of CERS2 and is inhibited in presence of ceramides. Post-translationally, acetylated. Deacetylation by SIRT3 increases enzyme activity and promotes mitochondrial ceramide accumulation. Phosphorylated at the C-terminus by CK2, leading to increase the ceramide synthase activity. As to expression, broadly expressed, with highest levels in liver and kidney. In brain is detected in neurons, oligodentrocytes, ependymal cells and epithelial cells of the choroid plexus. In kidney is detected in collecting ducts and to a lesser degree in proximal tubules.

The protein resides in the endoplasmic reticulum membrane. The catalysed reaction is a very long-chain fatty acyl-CoA + a sphingoid base = an N-(very-long-chain fatty acyl)-sphingoid base + CoA + H(+). It catalyses the reaction docosanoyl-CoA + sphinganine = N-docosanoylsphinganine + CoA + H(+). The enzyme catalyses tetracosanoyl-CoA + sphinganine = N-tetracosanoylsphinganine + CoA + H(+). It carries out the reaction hexacosanoyl-CoA + sphinganine = N-hexacosanoylsphinganine + CoA + H(+). The catalysed reaction is (15Z)-tetracosenoyl-CoA + sphinganine = N-(15Z-tetracosenoyl)-sphinganine + CoA + H(+). It catalyses the reaction 2-hydroxytetracosanoyl-CoA + sphinganine = N-(2-hydroxytetracosanoyl)-sphinganine + CoA + H(+). The enzyme catalyses 2-hydroxydocosanoyl-CoA + sphinganine = N-(2-hydroxydocosanoyl)-sphinganine + CoA + H(+). It carries out the reaction 2-hydroxytetracosenoyl-CoA + sphinganine = N-(2-hydroxytetracosenoyl)-sphinganine + CoA + H(+). The catalysed reaction is tetracosenoyl-CoA + sphinganine = an N-tetracosenoylsphinganine + CoA + H(+). It catalyses the reaction hexacosenoyl-CoA + sphinganine = N-hexacosenoylsphinganine + CoA + H(+). The enzyme catalyses tetracosanoyl-CoA + sphing-4-enine = N-tetracosanoyl-sphing-4-enine + CoA + H(+). It carries out the reaction tetracosenoyl-CoA + sphing-4-enine = N-(tetracosenoyl)-sphing-4-enine + CoA + H(+). The catalysed reaction is heptadecasphing-4-enine + tetracosanoyl-CoA = N-tetracosanoyl-heptadecasphing-4-enine + CoA + H(+). It catalyses the reaction a fatty acyl-CoA + sphing-4-enine = an N-acylsphing-4-enine + CoA + H(+). The enzyme catalyses sphing-4-enine + hexadecanoyl-CoA = N-hexadecanoylsphing-4-enine + CoA + H(+). It carries out the reaction sphing-4-enine + octadecanoyl-CoA = N-octadecanoylsphing-4-enine + CoA + H(+). The catalysed reaction is eicosanoyl-CoA + sphing-4-enine = N-eicosanoyl-sphing-4-enine + CoA + H(+). It catalyses the reaction sphinganine + hexadecanoyl-CoA = N-hexadecanoylsphinganine + CoA + H(+). The enzyme catalyses sphinganine + octadecanoyl-CoA = N-(octadecanoyl)-sphinganine + CoA + H(+). It carries out the reaction sphinganine + (9Z)-octadecenoyl-CoA = N-(9Z-octadecenoyl)-sphinganine + CoA + H(+). The catalysed reaction is eicosanoyl-CoA + sphinganine = N-eicosanoylsphinganine + CoA + H(+). The protein operates within lipid metabolism; sphingolipid metabolism. Its activity is regulated as follows. Ceramide synthase activity is inhibited by sphingosine-1-phosphate. Functionally, ceramide synthase that catalyzes the transfer of the acyl chain from acyl-CoA to a sphingoid base, with high selectivity toward very-long-chain fatty acyl-CoA (chain length C22-C27). N-acylates sphinganine and sphingosine bases to form dihydroceramides and ceramides in de novo synthesis and salvage pathways, respectively. Plays a non-redundant role in the synthesis of ceramides with very-long-chain fatty acids in kidney, liver and brain. Regulates the abundance of myelin-specific sphingolipids galactosylceramide and sulfatide that affects myelin sheath architecture and motor neuron functions. This chain is Ceramide synthase 2, found in Mus musculus (Mouse).